The chain runs to 49 residues: Large ribosomal subunit protein bL33 (49 aa).

Belongs to the bacterial ribosomal protein bL33 family.

The sequence is that of Large ribosomal subunit protein bL33 from Fervidobacterium nodosum (strain ATCC 35602 / DSM 5306 / Rt17-B1).